Here is a 2399-residue protein sequence, read N- to C-terminus: Norsolorinic acid synthase (2399 aa).

The tract at residues 10–247 (LVFGDQTYDF…RQIPIYVPAH (238 aa)) is starter unit:ACP transacylase (SAT) domain. Residues 372 to 805 (KSKLAIVSMS…GGNTALLIED (434 aa)) form the Ketosynthase family 3 (KS3) domain. Active-site for beta-ketoacyl synthase activity residues include Cys-544, His-679, and His-722. The interval 905-1192 (FAFTGQGSQY…LCGMIKNILG (288 aa)) is malonyl-CoA:ACP transacylase (MAT) domain. The active-site For acyl/malonyl transferase activity is Ser-995. Residues 1307–1327 (VQEAPAAKTETKKMSKLDPTK) form a disordered region. Residues 1315–1327 (TETKKMSKLDPTK) are compositionally biased toward basic and acidic residues. Positions 1340–1483 (HKVIEEKTEP…CTVRFTTDSQ (144 aa)) are N-terminal hotdog fold. The 319-residue stretch at 1340–1658 (HKVIEEKTEP…LRSVPRKALR (319 aa)) folds into the PKS/mFAS DH domain. A product template (PT) domain region spans residues 1353–1658 (QFTVETDISR…LRSVPRKALR (306 aa)). His-1372 (proton acceptor; for dehydratase activity) is an active-site residue. A C-terminal hotdog fold region spans residues 1510 to 1658 (LTHYNTKSGY…LRSVPRKALR (149 aa)). Asp-1570 functions as the Proton donor; for dehydratase activity in the catalytic mechanism. Residues 1665–1734 (MDKGIRQRGG…AALKASVPKA (70 aa)) form a disordered region. Over residues 1677–1698 (GAAKGAVAAPAPAKKMVEPVKA) the composition is skewed to low complexity. Over residues 1708–1723 (AAPPSPSKAAPPPAPK) the composition is skewed to pro residues. Positions 1724–1734 (PAALKASVPKA) are enriched in low complexity. 3 Carrier domains span residues 1733 to 1812 (KADP…AGAA), 1877 to 1953 (SKVF…GGSG), and 2020 to 2099 (VART…TGSS). Ser-1770, Ser-1911, and Ser-2057 each carry O-(pantetheine 4'-phosphoryl)serine. The span at 2098 to 2115 (SSADSDSSSVASNPADPA) shows a compositional bias: low complexity. The interval 2098 to 2149 (SSADSDSSSVASNPADPAATPPRSESSDTEPDDEAPSKPKSGPGSTDSCRST) is disordered. The segment covering 2140–2149 (PGSTDSCRST) has biased composition (polar residues). Positions 2164-2393 (TLFLLPDGGG…KARVNYVSDL (230 aa)) are thioesterase/Claisen cyclase (TE/CLC) domain. Residue Ser-2234 is the For thioesterase activity of the active site.

Pantetheine 4'-phosphate is required as a cofactor.

The catalysed reaction is hexanoyl-[ACP] + 7 malonyl-CoA + 6 H(+) = noranthrone + holo-[ACP] + 7 CO2 + 7 CoA + 2 H2O. Its pathway is mycotoxin biosynthesis. Functionally, polyketide synthase; part of the fragmented gene cluster that mediates the biosynthesis of dothistromin (DOTH), a polyketide toxin very similar in structure to the aflatoxin precursor, versicolorin B. The first step of the pathway is the conversion of acetate to norsolorinic acid (NOR) and requires the fatty acid synthase subunits hexA and hexB, as well as the polyketide synthase pksA. PksA combines a hexanoyl starter unit and 7 malonyl-CoA extender units to synthesize the precursor NOR. The hexanoyl starter unit is provided to the acyl-carrier protein (ACP) domain by the fungal fatty acid synthase hexA/hexB. The second step is the conversion of NOR to averantin (AVN) and requires the norsolorinic acid ketoreductase nor1, which catalyzes the dehydration of norsolorinic acid to form (1'S)-averantin. The cytochrome P450 monooxygenase avnA then catalyzes the hydroxylation of AVN to 5'hydroxyaverantin (HAVN). The next step is performed by adhA that transforms HAVN to averufin (AVF). Averufin might then be converted to hydroxyversicolorone by cypX and avfA. Hydroxyversicolorone is further converted versiconal hemiacetal acetate (VHA) by moxY. VHA is then the substrate for the versiconal hemiacetal acetate esterase est1 to yield versiconal (VAL). Versicolorin B synthase vbsA then converts VAL to versicolorin B (VERB) by closing the bisfuran ring. Then, the activity of the versicolorin B desaturase verB leads to versicolorin A (VERA). DotB, a predicted chloroperoxidase, may perform epoxidation of the A-ring of VERA. Alternatively, a cytochrome P450, such as cypX or avnA could catalyze this step. It is also possible that another, uncharacterized, cytochrome P450 enzyme is responsible for this step. Opening of the epoxide could potentially be achieved by the epoxide hydrolase epoA. However, epoA seems not to be required for DOTH biosynthesis, but other epoxide hydrolases may have the ability to complement this hydrolysis. Alternatively, opening of the epoxide ring could be achieved non-enzymatically. The next step is the deoxygenation of ring A to yield the 5,8-dihydroxyanthraquinone which is most likely catalyzed by the NADPH dehydrogenase encoded by ver1. The last stages of DOTH biosynthesis are proposed to involve hydroxylation of the bisfuran. OrdB and norB might have oxidative roles here. An alternative possibility is that cytochrome P450 monoogenases such as avnA and cypX might perform these steps in addition to previously proposed steps. The sequence is that of Norsolorinic acid synthase from Dothistroma septosporum (Red band needle blight fungus).